A 468-amino-acid chain; its full sequence is Hepatocyte nuclear factor 3-alpha (468 aa).

The segment at residues 169 to 260 (AKPPYSYISL…GNMFENGCYL (92 aa)) is a DNA-binding region (fork-head). Residues 251–288 (GNMFENGCYLRRQKRFKCEKQPGAGGGSGGGGSKGGPE) form an essential for DNA binding region. Residues 269–396 (EKQPGAGGGS…DPHYSFNHPF (128 aa)) form a disordered region. A compositionally biased stretch (gly residues) spans 273 to 285 (GAGGGSGGGGSKG). A phosphoserine mark is found at S303 and S327. Low complexity-rich tracts occupy residues 318–328 (GAPAPGPAASP) and 347–365 (SPAS…ALAS).

As to quaternary structure, binds DNA as a monomer. Interacts with FOXA2. Interacts with NKX2-1. Interacts with HDAC7. Interacts with the histone H3-H4 heterodimer. Associates with nucleosomes containing histone H2A. Interacts with AR. Interacts with NR0B2. Restricted mainly to endoderm-derived tissues (lung, liver, stomach, and small intestine). Expressed in the prostate.

The protein localises to the nucleus. Transcription factor that is involved in embryonic development, establishment of tissue-specific gene expression and regulation of gene expression in differentiated tissues. Is thought to act as a 'pioneer' factor opening the compacted chromatin for other proteins through interactions with nucleosomal core histones and thereby replacing linker histones at target enhancer and/or promoter sites. Binds DNA with the consensus sequence 5'-[AC]A[AT]T[AG]TT[GT][AG][CT]T[CT]-3'. Proposed to play a role in translating the epigenetic signatures into cell type-specific enhancer-driven transcriptional programs. Involved in the development of multiple endoderm-derived organ systems such as the liver, pancreas, lungs and prostate; FOXA1 and FOXA2 seem to have at least in part redundant roles. Plays a role in prostate morphogenesis and epithelial cell differentiation. FOXA1 and FOXA2 are essential for hepatic specification. FOXA1 and FOXA2 are required for morphogenesis and cell differentiation during formation of the lung. FOXA1 and FOXA2 are involved in bile duct formation; they positively regulate the binding of glucocorticoid receptor/NR3C1 to the IL6 promoter. FOXA1 and FOXA2 regulate multiple phases of midbrain dopaminergic neuron development; they regulate expression of NEUROG2 at the beginning of mDA neurogenesis and of NR4A2 and EN1 in immature mDA neurons. Modulates the transcriptional activity of nuclear hormone receptors. Is involved in ESR1-mediated transcription. Inhibits NKX2-1-mediated transcription from the SFTPC promoter in lung epithel independently from DNA-binding. Involved in regulation of apoptosis. Involved in cell cycle regulation. Originally described as a transcription activator for a number of liver genes such as AFP, albumin, tyrosine aminotransferase, PEPCK, etc. Interacts with the cis-acting regulatory regions of these genes. Involved in glucose homeostasis; activates the GCG promoter. This Mus musculus (Mouse) protein is Hepatocyte nuclear factor 3-alpha (Foxa1).